A 1274-amino-acid chain; its full sequence is Paired amphipathic helix protein Sin3a (1274 aa).

Disordered regions lie at residues 1–26 (MKRRLDDQESPVYAAQQRRIPGSTEA) and 85–110 (HHHPTAVQPHGGQVVQSHAHPAPPVA). Ser-10 carries the post-translational modification Phosphoserine. The 71-residue stretch at 119–189 (QRLKVEDALS…MGFNTFLPPG (71 aa)) folds into the PAH 1 domain. Residues 119-196 (QRLKVEDALS…PPGYKIEVQT (78 aa)) are interaction with HCFC1. Residues Lys-122 and Lys-134 each participate in a glycyl lysine isopeptide (Lys-Gly) (interchain with G-Cter in SUMO2) cross-link. The tract at residues 205–297 (PGQVHQIPTH…ISLGTAPSLQ (93 aa)) is disordered. The segment at 205 to 479 (PGQVHQIPTH…KVRKALRSAE (275 aa)) is interaction with REST. Residues 228–237 (SQPSSQSAPT) show a composition bias toward low complexity. Polar residues predominate over residues 252 to 266 (KPSQLQAHTPASQQT). Residues 267-282 (PPLPPYASPRSPPVQP) show a composition bias toward pro residues. Residue Ser-277 is modified to Phosphoserine. Thr-284 carries the phosphothreonine modification. Residues 284–297 (TPVTISLGTAPSLQ) are compositionally biased toward polar residues. Residues 300-383 (QPVEFNHAIN…SEFGQFLPDA (84 aa)) enclose the PAH 2 domain. Residues 398 to 443 (DSVRNDHGGTVKKPQLNNKPQRPSQNGCQIRRHSGTGATPPVKKKP) are disordered. The segment covering 412–425 (QLNNKPQRPSQNGC) has biased composition (polar residues). The region spanning 457–526 (SKHGVGTESL…NWFKNFLGYK (70 aa)) is the PAH 3 domain. The interaction with SAP30 stretch occupies residues 459–526 (HGVGTESLFF…NWFKNFLGYK (68 aa)). Lys-470 carries the post-translational modification N6-acetyllysine. Positions 524 to 851 (GYKESVHLES…EMDVDEATGA (328 aa)) are interaction with NCOR1. The interactions with SUDS3 and SAP130 stretch occupies residues 525–660 (YKESVHLESF…KFRLDNTLGG (136 aa)). Lys-564 is covalently cross-linked (Glycyl lysine isopeptide (Lys-Gly) (interchain with G-Cter in SUMO2)). The tract at residues 688–830 (NPSIAVPIVL…IPDLLFAQRG (143 aa)) is interactions with HDAC1 and ARID4B. A Phosphoserine modification is found at Ser-833. A compositionally biased stretch (acidic residues) spans 835–847 (VEEEEEEEMDVDE). The disordered stretch occupies residues 835 to 865 (VEEEEEEEMDVDEATGAPKKHNGVGGSPPKS). Residue Ser-861 is modified to Phosphoserine. Lys-866 and Lys-876 each carry N6-acetyllysine. The interval 889–968 (VNNNWYIFMR…YYPAFLDMVR (80 aa)) is interaction with OGT. Residues 904 to 933 (CLRLLRICSQAERQIEEENREREWEREVLG) are a coiled coil. Residues Ser-941, Ser-1090, and Ser-1113 each carry the phosphoserine modification. A disordered region spans residues 1137 to 1157 (CQRGREQQEKEGKEGNSKKTM). A compositionally biased stretch (basic and acidic residues) spans 1139 to 1157 (RGREQQEKEGKEGNSKKTM).

In terms of assembly, interacts with ARID4B, BRMS1L, HCFC1, HDAC1, HDAC2, MXI1, SAP30L, SAP130, SFPQ and TOPORS. Interacts with OGT (via TPRs 1-6); the interaction mediates transcriptional repression in parallel with histone deacetylase. Interacts with BAZ2A, MXD1, MXD3, MXD4, MBD2, DACH1, NCOR1, NR4A2, REST, RLIM, SAP30, SETDB1, SMYD2, and SUDS3. Interacts with PHF12 in a complex composed of HDAC1, PHF12 and SAP30. Interacts with TET1; the interaction recruits SIN3A to gene promoters. The large PER complex involved in the histone deacetylation is composed of at least HDAC1, PER2, SFPQ and SIN3A. Interacts with KLF11. Interacts with PPHLN1. Found in a complex with YY1, GON4L and HDAC1. Interacts (via PAH2) with FOXK1. Interacts with FOXK2. Found in a complex composed of at least SINHCAF, SIN3A, HDAC1, SAP30, RBBP4, OGT and TET1. Interacts with SINHCAF. Interacts with SPHK2. SUMO1 sumoylated by TOPORS. Probably desumoylated by SENP2. As to expression, widely expressed. Highest levels in testis, lung and thymus. Expressed at relatively high levels throughout brain development. In adult mice, expression is high in neurogenic regions such as the subventricular zone, rostral migratory stream, olfactory bulb and dentate gyrus.

The protein localises to the nucleus. The protein resides in the nucleolus. Its function is as follows. Acts as a transcriptional repressor. Corepressor for REST. Interacts with MXI1 to repress MYC responsive genes and antagonize MYC oncogenic activities. Also interacts with MXD1-MAX heterodimers to repress transcription by tethering SIN3A to DNA. Acts cooperatively with OGT to repress transcription in parallel with histone deacetylation. Involved in the control of the circadian rhythms. Required for the transcriptional repression of circadian target genes, such as PER1, mediated by the large PER complex through histone deacetylation. Cooperates with FOXK1 to regulate cell cycle progression probably by repressing cell cycle inhibitor genes expression. Required for cortical neuron differentiation and callosal axon elongation. The sequence is that of Paired amphipathic helix protein Sin3a (Sin3a) from Mus musculus (Mouse).